Here is a 598-residue protein sequence, read N- to C-terminus: Aspartate--tRNA(Asp/Asn) ligase (598 aa).

L-aspartate is bound at residue glutamate 177. An aspartate region spans residues 201–204; sequence QLFK. Residue arginine 223 coordinates L-aspartate. ATP is bound by residues 223-225 and glutamine 232; that span reads RDE. Residue histidine 456 coordinates L-aspartate. Glutamate 493 serves as a coordination point for ATP. Arginine 500 is a binding site for L-aspartate. 545 to 548 contacts ATP; the sequence is GLDR.

It belongs to the class-II aminoacyl-tRNA synthetase family. Type 1 subfamily. Homodimer.

The protein localises to the cytoplasm. It carries out the reaction tRNA(Asx) + L-aspartate + ATP = L-aspartyl-tRNA(Asx) + AMP + diphosphate. Its function is as follows. Aspartyl-tRNA synthetase with relaxed tRNA specificity since it is able to aspartylate not only its cognate tRNA(Asp) but also tRNA(Asn). Reaction proceeds in two steps: L-aspartate is first activated by ATP to form Asp-AMP and then transferred to the acceptor end of tRNA(Asp/Asn). This is Aspartate--tRNA(Asp/Asn) ligase from Prochlorococcus marinus (strain AS9601).